We begin with the raw amino-acid sequence, 172 residues long: Small ribosomal subunit protein uS5 (172 aa).

An S5 DRBM domain is found at 17-80 (LKEKMIQVNR…DAARRDMVKV (64 aa)).

Belongs to the universal ribosomal protein uS5 family. Part of the 30S ribosomal subunit. Contacts proteins S4 and S8.

Its function is as follows. With S4 and S12 plays an important role in translational accuracy. Functionally, located at the back of the 30S subunit body where it stabilizes the conformation of the head with respect to the body. The polypeptide is Small ribosomal subunit protein uS5 (Methylibium petroleiphilum (strain ATCC BAA-1232 / LMG 22953 / PM1)).